The primary structure comprises 375 residues: Tyrosine--tRNA ligase (375 aa).

Residues Tyr-37, Tyr-168, Gln-172, Asp-175, and Gln-190 each contribute to the L-tyrosine site. Positions 251–255 match the 'KMSKS' region motif; the sequence is KMSKS. Residue Lys-254 coordinates ATP.

The protein belongs to the class-I aminoacyl-tRNA synthetase family. TyrS type 4 subfamily. In terms of assembly, homodimer.

The protein resides in the cytoplasm. The enzyme catalyses tRNA(Tyr) + L-tyrosine + ATP = L-tyrosyl-tRNA(Tyr) + AMP + diphosphate + H(+). Catalyzes the attachment of tyrosine to tRNA(Tyr) in a two-step reaction: tyrosine is first activated by ATP to form Tyr-AMP and then transferred to the acceptor end of tRNA(Tyr). This Thermococcus onnurineus (strain NA1) protein is Tyrosine--tRNA ligase.